Consider the following 351-residue polypeptide: Ion-translocating oxidoreductase complex subunit D (351 aa).

A run of 4 helical transmembrane segments spans residues 20–40 (IMLL…YFFG), 44–64 (LIQV…TLSL), 89–109 (LPPL…IIIA), and 123–143 (PAMI…TSWL). Threonine 187 is subject to FMN phosphoryl threonine. 5 helical membrane passes run 215–235 (LSGI…LFLL), 244–264 (IPVS…VIAP), 267–287 (FAPP…FFIA), 301–321 (LIFG…GGYP), and 322–342 (DGVA…DYYT).

This sequence belongs to the NqrB/RnfD family. In terms of assembly, the complex is composed of six subunits: RnfA, RnfB, RnfC, RnfD, RnfE and RnfG. FMN serves as cofactor.

It localises to the cell inner membrane. In terms of biological role, part of a membrane-bound complex that couples electron transfer with translocation of ions across the membrane. The protein is Ion-translocating oxidoreductase complex subunit D of Pectobacterium carotovorum subsp. carotovorum (strain PC1).